Consider the following 219-residue polypeptide: Translation initiation factor 6 (219 aa).

It belongs to the eIF-6 family.

Its function is as follows. Binds to the 50S ribosomal subunit and prevents its association with the 30S ribosomal subunit to form the 70S initiation complex. This Methanosarcina mazei (strain ATCC BAA-159 / DSM 3647 / Goe1 / Go1 / JCM 11833 / OCM 88) (Methanosarcina frisia) protein is Translation initiation factor 6.